We begin with the raw amino-acid sequence, 432 residues long: MTGIGNQTSGIETGVHDRAPADGEPTALPISHSPLPIPGAHARPPRFALIAGEASGDILGAGLIAQLRLRYPNAEFVGIGGDAMRGAGCQTWFDASELAVMGLTEVLRHLPRLLKLRSAFRERVLAWKPDVFIGIDAPDFNLPVERWLKQRGIKTVHYVSPSVWAWREKRAEKIAVSADLVLCLFPMEPPIYAKHGVDARFVGHPMADDIAYQADRDAARATLGLSASSTVLAVLPGSRHGEISRLGDTFLQAAWLVCEHIPNLHVLVPAANAGCKQLLAEQLSRSSLPVMRSHLINGQARTAMLAADVVLLASGTATLEAMLVKRPMVVGYKVAPLTYRIVKLLGLIKVNRYALPNILANDDLAPELMQDDCMPERLCVALLDWLKHPAKVAALQPRYLALHAALRRDASARAAEAVAGLLQGRDWSGANI.

The segment covering 1–11 (MTGIGNQTSGI) has biased composition (polar residues). The interval 1 to 35 (MTGIGNQTSGIETGVHDRAPADGEPTALPISHSPL) is disordered.

The protein belongs to the LpxB family.

It carries out the reaction a lipid X + a UDP-2-N,3-O-bis[(3R)-3-hydroxyacyl]-alpha-D-glucosamine = a lipid A disaccharide + UDP + H(+). Its pathway is bacterial outer membrane biogenesis; LPS lipid A biosynthesis. Its function is as follows. Condensation of UDP-2,3-diacylglucosamine and 2,3-diacylglucosamine-1-phosphate to form lipid A disaccharide, a precursor of lipid A, a phosphorylated glycolipid that anchors the lipopolysaccharide to the outer membrane of the cell. The sequence is that of Lipid-A-disaccharide synthase from Xanthomonas oryzae pv. oryzae (strain MAFF 311018).